Here is a 384-residue protein sequence, read N- to C-terminus: MNKDGTVVLMNELASYASDPSKTRGRRHSEPPPENRTEFQRDRDRIIHSNAFRRLEYKTQVFVNHEGDLFRTRLTHSLEVAQIARTLARSLRVSEDLTEAIALAHDLGHTPFGHAGQDELNACMRELAPQAGGFEHNLQSLRVVDELEERYAEFNGLNLCFETREGILKHCSATHARQLGAVGERFLDRTQPSLEAQLANLADEVAYNNHDVDDGLRSGLITLEQLQEVGIFARHYAEVARRYPQLAPRRATSETIRRMINTLIVDLTATSLARIRDHAPASADDVRRAPPLAGFSAAVRREADELKKFLFDNLYRHYRVVRMTTKVQRIVRELFQAFLGDPRLLPPDYRREQPQDQARAISDYIAGMTDRYAIREHRRLFEMG.

The tract at residues 12–39 (ELASYASDPSKTRGRRHSEPPPENRTEF) is disordered. A compositionally biased stretch (basic and acidic residues) spans 28-39 (HSEPPPENRTEF). An HD domain is found at 73 to 208 (RLTHSLEVAQ…ANLADEVAYN (136 aa)).

Belongs to the dGTPase family. Type 2 subfamily.

This chain is Deoxyguanosinetriphosphate triphosphohydrolase-like protein, found in Bordetella parapertussis (strain 12822 / ATCC BAA-587 / NCTC 13253).